Consider the following 638-residue polypeptide: MMGIQILPPQLANQIAAGEVVERPASVVKELVENSLDAGASRVDIEIDKGGSKLIKIRDNGSGIPKDELALALSRHATSKLHTLDDLEAILSFGFRGEALASISSVSRLTLTSRTADQTEAWQAHAEGADMAVKVMPAAHPVGSTIEVVDLFFNTPARRRFLKSDKTEFTHIDEWLKRIALVRGDIHFTLTHNGKMVRNYRPAMNEAQYLQRLTQVCGRPFAEQALKIECQHDDLRLSGYLQSPWSPVISDTHYFYVNGRLIRDRLVNHAVRQAFAQKAELEQPGYVLMLDIDPHQVDVNVHPAKHEVRFHQSRYVHDYILQALQSALEEAGELNFVHSSSLDEVEDVFVDAPTSATEISAPFVLGADSAQVNVPADTLESAQPLVASAVQVKSAGAGREGTSFGTQTNAFGSMATPRDNSRGSYSAGESRQRTELPSKAAIASYGALLQTPSYSVKDQDYQPSLPMPAILDGQYWVMATADKLSLLPIKSVALATRCQEIEAKLATGLIGQPLLMPVSVAADADWQAVLDEHDTLIRQLGLELTIRYQQLIIKKVPPYIRESQLAKVIPEWLQSLRFETPAPSALAFWLAKHSLTGFVSAPEIWAAFSQLAEEKKQLIANKAILLPWQSWLEEQASE.

Residues 398 to 435 (GREGTSFGTQTNAFGSMATPRDNSRGSYSAGESRQRTE) form a disordered region.

It belongs to the DNA mismatch repair MutL/HexB family.

This protein is involved in the repair of mismatches in DNA. It is required for dam-dependent methyl-directed DNA mismatch repair. May act as a 'molecular matchmaker', a protein that promotes the formation of a stable complex between two or more DNA-binding proteins in an ATP-dependent manner without itself being part of a final effector complex. The sequence is that of DNA mismatch repair protein MutL from Shewanella baltica (strain OS155 / ATCC BAA-1091).